Reading from the N-terminus, the 133-residue chain is Small ribosomal subunit protein uS19 (133 aa).

This sequence belongs to the universal ribosomal protein uS19 family.

Its function is as follows. Protein S19 forms a complex with S13 that binds strongly to the 16S ribosomal RNA. The chain is Small ribosomal subunit protein uS19 (rps19) from Archaeoglobus fulgidus (strain ATCC 49558 / DSM 4304 / JCM 9628 / NBRC 100126 / VC-16).